The following is a 644-amino-acid chain: 2-isopropylmalate synthase (644 aa).

Residues 1-40 (MTTSESPDAYTESFGAHTIVKPAGPPRVGQPSWNPQRASS) are disordered. Over residues 31–40 (PSWNPQRASS) the composition is skewed to polar residues. One can recognise a Pyruvate carboxyltransferase domain in the interval 72–346 (PLWCAVDLRD…DPQIDFSNID (275 aa)). Aspartate 81, histidine 285, histidine 287, and asparagine 321 together coordinate Mg(2+). The regulatory domain stretch occupies residues 491–644 (PVRPLERIRQ…VVSAVNRAAR (154 aa)). A VNTR1 repeat occupies 575–593 (VTIASPAQPGEAGRHASDP). The disordered stretch occupies residues 581–612 (AQPGEAGRHASDPVTIASPAQPGEAGRHASDP). The VNTR2 repeat unit spans residues 594–612 (VTIASPAQPGEAGRHASDP).

Belongs to the alpha-IPM synthase/homocitrate synthase family. LeuA type 2 subfamily. In terms of assembly, homodimer. It depends on Mg(2+) as a cofactor.

It is found in the cytoplasm. It carries out the reaction 3-methyl-2-oxobutanoate + acetyl-CoA + H2O = (2S)-2-isopropylmalate + CoA + H(+). It functions in the pathway amino-acid biosynthesis; L-leucine biosynthesis; L-leucine from 3-methyl-2-oxobutanoate: step 1/4. Functionally, catalyzes the condensation of the acetyl group of acetyl-CoA with 3-methyl-2-oxobutanoate (2-ketoisovalerate) to form 3-carboxy-3-hydroxy-4-methylpentanoate (2-isopropylmalate). The protein is 2-isopropylmalate synthase of Mycobacterium tuberculosis (strain CDC 1551 / Oshkosh).